The sequence spans 104 residues: UPF0145 protein NP_2600A (104 aa).

Belongs to the UPF0145 family.

The protein is UPF0145 protein NP_2600A of Natronomonas pharaonis (strain ATCC 35678 / DSM 2160 / CIP 103997 / JCM 8858 / NBRC 14720 / NCIMB 2260 / Gabara) (Halobacterium pharaonis).